Reading from the N-terminus, the 729-residue chain is Phosphoribosylformylglycinamidine synthase subunit PurL (729 aa).

Histidine 54 is an active-site residue. ATP contacts are provided by tyrosine 57 and lysine 96. Glutamate 98 is a binding site for Mg(2+). Residues 99–102 and arginine 121 each bind substrate; that span reads SHNH. Histidine 100 serves as the catalytic Proton acceptor. Residue aspartate 122 participates in Mg(2+) binding. Glutamine 245 serves as a coordination point for substrate. Aspartate 273 is a Mg(2+) binding site. 317–319 contacts substrate; sequence ETQ. Positions 495 and 532 each coordinate ATP. Asparagine 533 serves as a coordination point for Mg(2+). Serine 535 contributes to the substrate binding site.

This sequence belongs to the FGAMS family. Monomer. Part of the FGAM synthase complex composed of 1 PurL, 1 PurQ and 2 PurS subunits.

Its subcellular location is the cytoplasm. The enzyme catalyses N(2)-formyl-N(1)-(5-phospho-beta-D-ribosyl)glycinamide + L-glutamine + ATP + H2O = 2-formamido-N(1)-(5-O-phospho-beta-D-ribosyl)acetamidine + L-glutamate + ADP + phosphate + H(+). The protein operates within purine metabolism; IMP biosynthesis via de novo pathway; 5-amino-1-(5-phospho-D-ribosyl)imidazole from N(2)-formyl-N(1)-(5-phospho-D-ribosyl)glycinamide: step 1/2. Its function is as follows. Part of the phosphoribosylformylglycinamidine synthase complex involved in the purines biosynthetic pathway. Catalyzes the ATP-dependent conversion of formylglycinamide ribonucleotide (FGAR) and glutamine to yield formylglycinamidine ribonucleotide (FGAM) and glutamate. The FGAM synthase complex is composed of three subunits. PurQ produces an ammonia molecule by converting glutamine to glutamate. PurL transfers the ammonia molecule to FGAR to form FGAM in an ATP-dependent manner. PurS interacts with PurQ and PurL and is thought to assist in the transfer of the ammonia molecule from PurQ to PurL. The chain is Phosphoribosylformylglycinamidine synthase subunit PurL from Staphylococcus saprophyticus subsp. saprophyticus (strain ATCC 15305 / DSM 20229 / NCIMB 8711 / NCTC 7292 / S-41).